Consider the following 162-residue polypeptide: NADH-quinone oxidoreductase subunit I (162 aa).

4Fe-4S ferredoxin-type domains lie at 53-83 (QRRYANGEERCIACKLCEAVCPAMAISIESE) and 93-122 (SRYDIDLTKCIFCGFCEEACPVDAIVETHI). 8 residues coordinate [4Fe-4S] cluster: Cys63, Cys66, Cys69, Cys73, Cys102, Cys105, Cys108, and Cys112.

It belongs to the complex I 23 kDa subunit family. NDH-1 is composed of 14 different subunits. Subunits NuoA, H, J, K, L, M, N constitute the membrane sector of the complex. [4Fe-4S] cluster serves as cofactor.

It localises to the cell inner membrane. It carries out the reaction a quinone + NADH + 5 H(+)(in) = a quinol + NAD(+) + 4 H(+)(out). Its function is as follows. NDH-1 shuttles electrons from NADH, via FMN and iron-sulfur (Fe-S) centers, to quinones in the respiratory chain. The immediate electron acceptor for the enzyme in this species is believed to be ubiquinone. Couples the redox reaction to proton translocation (for every two electrons transferred, four hydrogen ions are translocated across the cytoplasmic membrane), and thus conserves the redox energy in a proton gradient. The protein is NADH-quinone oxidoreductase subunit I of Chromobacterium violaceum (strain ATCC 12472 / DSM 30191 / JCM 1249 / CCUG 213 / NBRC 12614 / NCIMB 9131 / NCTC 9757 / MK).